The chain runs to 350 residues: Very-long-chain 3-oxoacyl-CoA reductase (350 aa).

Residues 20–40 form a helical membrane-spanning segment; sequence ALLFSLLFGVFKLTTFTLRFA. NADP(+) contacts are provided by valine 66, aspartate 120, asparagine 147, tyrosine 221, lysine 225, valine 254, and serine 256. The Proton donor role is filled by tyrosine 221. Catalysis depends on lysine 225, which acts as the Lowers pKa of active site Tyr.

This sequence belongs to the short-chain dehydrogenases/reductases (SDR) family.

Its subcellular location is the endoplasmic reticulum membrane. The enzyme catalyses a very-long-chain (3R)-3-hydroxyacyl-CoA + NADP(+) = a very-long-chain 3-oxoacyl-CoA + NADPH + H(+). The protein operates within lipid metabolism; fatty acid biosynthesis. In terms of biological role, component of the microsomal membrane bound fatty acid elongation system, which produces the 26-carbon very long-chain fatty acids (VLCFA) from palmitate. Catalyzes the reduction of the 3-ketoacyl-CoA intermediate that is formed in each cycle of fatty acid elongation. VLCFAs serve as precursors for ceramide and sphingolipids. This chain is Very-long-chain 3-oxoacyl-CoA reductase, found in Lodderomyces elongisporus (strain ATCC 11503 / CBS 2605 / JCM 1781 / NBRC 1676 / NRRL YB-4239) (Yeast).